A 527-amino-acid polypeptide reads, in one-letter code: Ribosomal protein S6 kinase beta-1 (527 aa).

The disordered stretch occupies residues 1–54 (MRRRRRRDGFYPAPDFRDREAEDMAGVFDIDLDQPEDAGSEDELEEGGQLNESM). Positions 28–32 (FDIDL) match the TOS motif motif. Over residues 30-46 (IDLDQPEDAGSEDELEE) the composition is skewed to acidic residues. Positions 91-352 (FELLRVLGKG…AGEVQAHPFF (262 aa)) constitute a Protein kinase domain. Residues 97-105 (LGKGGYGKV) and K123 contribute to the ATP site. The active-site Proton acceptor is the D218. T252 carries the phosphothreonine; by PDPK1 modification. The region spanning 353 to 423 (RHINWEELLA…VAPSVLESVK (71 aa)) is the AGC-kinase C-terminal domain. Residue S394 is modified to Phosphoserine. T412 carries the post-translational modification Phosphothreonine; by MTOR, NEK6 and NEK7. An autoinhibitory domain region spans residues 424 to 527 (EKFSFEPKIR…PEHLRMNLEL (104 aa)). Phosphoserine occurs at positions 434 and 441. T444 is subject to Phosphothreonine. S447 and S452 each carry phosphoserine. K516 carries the post-translational modification N6-acetyllysine.

This sequence belongs to the protein kinase superfamily. AGC Ser/Thr protein kinase family. S6 kinase subfamily. In terms of assembly, interacts with PPP1R9A/neurabin-1. Interacts with RPTOR. Interacts with IRS1. Interacts with EIF3B and EIF3C. Interacts with TRAF4. Interacts with POLDIP3. Interacts (via N-terminus) with IER5. In terms of processing, phosphorylation at Thr-412 is regulated by mTORC1. The phosphorylation at this site is maintained by an agonist-dependent autophosphorylation mechanism. Activated by phosphorylation at Thr-252 by PDPK1. Dephosphorylation by PPP1CC at Thr-412 in mitochondrion.

The protein localises to the cytoplasm. It localises to the synapse. Its subcellular location is the synaptosome. It is found in the mitochondrion outer membrane. The protein resides in the mitochondrion. It carries out the reaction L-seryl-[protein] + ATP = O-phospho-L-seryl-[protein] + ADP + H(+). The enzyme catalyses L-threonyl-[protein] + ATP = O-phospho-L-threonyl-[protein] + ADP + H(+). Inactivated by binding to URI1. Activation requires multiple phosphorylation events on serine/threonine residues. Activation appears to be first mediated by phosphorylation of multiple sites in the autoinhibitory domain, which facilitates phosphorylation at Thr-412, disrupting the autoinhibitory mechanism and allowing phosphorylation of Thr-252 by PDPK1. The active conformation of the kinase is believed to be stabilized by a mechanism involving three conserved phosphorylation sites located in the kinase domain activation loop (Thr-252) and in the AGC-kinase C-terminal domain (Ser-394 in the middle of the tail/linker region and Thr-412 within a hydrophobic motif at its end). Activated by mTORC1; isoform Alpha I and isoform Alpha II are sensitive to rapamycin, which inhibits activating phosphorylation at Thr-412. Activated by PDPK1. Its function is as follows. Serine/threonine-protein kinase that acts downstream of mTOR signaling in response to growth factors and nutrients to promote cell proliferation, cell growth and cell cycle progression. Regulates protein synthesis through phosphorylation of EIF4B, RPS6 and EEF2K, and contributes to cell survival by repressing the pro-apoptotic function of BAD. Under conditions of nutrient depletion, the inactive form associates with the EIF3 translation initiation complex. Upon mitogenic stimulation, phosphorylation by the mechanistic target of rapamycin complex 1 (mTORC1) leads to dissociation from the EIF3 complex and activation. The active form then phosphorylates and activates several substrates in the pre-initiation complex, including the EIF2B complex and the cap-binding complex component EIF4B. Also controls translation initiation by phosphorylating a negative regulator of EIF4A, PDCD4, targeting it for ubiquitination and subsequent proteolysis. Promotes initiation of the pioneer round of protein synthesis by phosphorylating POLDIP3/SKAR. In response to IGF1, activates translation elongation by phosphorylating EEF2 kinase (EEF2K), which leads to its inhibition and thus activation of EEF2. Also plays a role in feedback regulation of mTORC2 by mTORC1 by phosphorylating MAPKAP1/SIN1, MTOR and RICTOR, resulting in the inhibition of mTORC2 and AKT1 signaling. Also involved in feedback regulation of mTORC1 and mTORC2 by phosphorylating DEPTOR. Mediates cell survival by phosphorylating the pro-apoptotic protein BAD and suppressing its pro-apoptotic function. Phosphorylates mitochondrial URI1 leading to dissociation of a URI1-PPP1CC complex. The free mitochondrial PPP1CC can then dephosphorylate RPS6KB1 at Thr-412, which is proposed to be a negative feedback mechanism for the RPS6KB1 anti-apoptotic function. Mediates TNF-alpha-induced insulin resistance by phosphorylating IRS1 at multiple serine residues, resulting in accelerated degradation of IRS1. In cells lacking functional TSC1-2 complex, constitutively phosphorylates and inhibits GSK3B. May be involved in cytoskeletal rearrangement through binding to neurabin. Phosphorylates and activates the pyrimidine biosynthesis enzyme CAD, downstream of MTOR. Following activation by mTORC1, phosphorylates EPRS and thereby plays a key role in fatty acid uptake by adipocytes and also most probably in interferon-gamma-induced translation inhibition. In Bos taurus (Bovine), this protein is Ribosomal protein S6 kinase beta-1 (RPS6KB1).